Here is a 469-residue protein sequence, read N- to C-terminus: Citrate synthase, mitochondrial (469 aa).

The N-terminal 30 residues, 1-30 (MSFLSVSRLAPKLLNSKNATYFLVAARNAS), are a transit peptide targeting the mitochondrion. Residues His-304 and His-350 contribute to the active site. An oxaloacetate-binding site is contributed by Arg-359. Residue Asp-405 is part of the active site. Oxaloacetate-binding residues include Arg-431 and Arg-451.

This sequence belongs to the citrate synthase family. Homodimer.

It is found in the mitochondrion matrix. The enzyme catalyses oxaloacetate + acetyl-CoA + H2O = citrate + CoA + H(+). Its pathway is carbohydrate metabolism; tricarboxylic acid cycle; isocitrate from oxaloacetate: step 1/2. In terms of biological role, key enzyme of the Krebs tricarboxylic acid cycle which catalyzes the synthesis of citrate from acetyl coenzyme A and oxaloacetate. The chain is Citrate synthase, mitochondrial (cs) from Katsuwonus pelamis (Skipjack tuna).